Consider the following 131-residue polypeptide: MKMKIITPDGYVWDREIEEVILPSSTGQLGILAHHAPLLTALDIGVMRAKTAQGWVALVLFGGFAEVLNNQITILVNGAQEAHEIDLQHAQQEEAKALEQLQQAATPTAQIEARQNLAKWRARVQAVSFQI.

This sequence belongs to the ATPase epsilon chain family. In terms of assembly, F-type ATPases have 2 components, CF(1) - the catalytic core - and CF(0) - the membrane proton channel. CF(1) has five subunits: alpha(3), beta(3), gamma(1), delta(1), epsilon(1). CF(0) has three main subunits: a, b and c.

Its subcellular location is the plastid. The protein localises to the chloroplast thylakoid membrane. Functionally, produces ATP from ADP in the presence of a proton gradient across the membrane. This is ATP synthase epsilon chain, chloroplastic from Cyanidioschyzon merolae (strain NIES-3377 / 10D) (Unicellular red alga).